The chain runs to 373 residues: 3-isopropylmalate dehydrogenase (373 aa).

82–93 (GPKWGTGALRPE) is an NAD(+) binding site. Residues Arg100, Arg110, Arg139, and Asp231 each contribute to the substrate site. Asp231, Asp256, and Asp260 together coordinate Mg(2+). Position 295–306 (295–306 (GSAPDLPANKVN)) interacts with NAD(+).

This sequence belongs to the isocitrate and isopropylmalate dehydrogenases family. In terms of assembly, homodimer. Mg(2+) is required as a cofactor. Mn(2+) serves as cofactor.

It localises to the cytoplasm. It catalyses the reaction (2R,3S)-3-isopropylmalate + NAD(+) = 4-methyl-2-oxopentanoate + CO2 + NADH. Its pathway is amino-acid biosynthesis; L-leucine biosynthesis; L-leucine from 3-methyl-2-oxobutanoate: step 3/4. In terms of biological role, catalyzes the oxidation of 3-carboxy-2-hydroxy-4-methylpentanoate (3-isopropylmalate) to 3-carboxy-4-methyl-2-oxopentanoate. The product decarboxylates to 4-methyl-2 oxopentanoate. The protein is 3-isopropylmalate dehydrogenase (LEU2) of Candida maltosa (Yeast).